The following is a 113-amino-acid chain: Large ribosomal subunit protein uL22 (113 aa).

It belongs to the universal ribosomal protein uL22 family. In terms of assembly, part of the 50S ribosomal subunit.

Functionally, this protein binds specifically to 23S rRNA; its binding is stimulated by other ribosomal proteins, e.g. L4, L17, and L20. It is important during the early stages of 50S assembly. It makes multiple contacts with different domains of the 23S rRNA in the assembled 50S subunit and ribosome. Its function is as follows. The globular domain of the protein is located near the polypeptide exit tunnel on the outside of the subunit, while an extended beta-hairpin is found that lines the wall of the exit tunnel in the center of the 70S ribosome. The polypeptide is Large ribosomal subunit protein uL22 (Mycoplasmopsis synoviae (strain 53) (Mycoplasma synoviae)).